The following is a 130-amino-acid chain: Large ribosomal subunit protein bL20 (130 aa).

The protein belongs to the bacterial ribosomal protein bL20 family.

Binds directly to 23S ribosomal RNA and is necessary for the in vitro assembly process of the 50S ribosomal subunit. It is not involved in the protein synthesizing functions of that subunit. The chain is Large ribosomal subunit protein bL20 from Salinispora arenicola (strain CNS-205).